A 275-amino-acid chain; its full sequence is NH(3)-dependent NAD(+) synthetase (275 aa).

ATP is bound at residue 50-57; that stretch reads GISGGVDS. A Mg(2+)-binding site is contributed by aspartate 56. Arginine 147 serves as a coordination point for deamido-NAD(+). Threonine 167 serves as a coordination point for ATP. Glutamate 172 provides a ligand contact to Mg(2+). Deamido-NAD(+) contacts are provided by lysine 180 and aspartate 187. Residues lysine 196 and threonine 218 each contribute to the ATP site. Position 267–268 (267–268) interacts with deamido-NAD(+); sequence HK.

Belongs to the NAD synthetase family. In terms of assembly, homodimer.

It carries out the reaction deamido-NAD(+) + NH4(+) + ATP = AMP + diphosphate + NAD(+) + H(+). It participates in cofactor biosynthesis; NAD(+) biosynthesis; NAD(+) from deamido-NAD(+) (ammonia route): step 1/1. Catalyzes the ATP-dependent amidation of deamido-NAD to form NAD. Uses ammonia as a nitrogen source. The sequence is that of NH(3)-dependent NAD(+) synthetase from Pseudomonas syringae pv. tomato (strain ATCC BAA-871 / DC3000).